A 184-amino-acid chain; its full sequence is Transmembrane protein 140 (184 aa).

The Cytoplasmic segment spans residues 1-12 (MAISRVWRNRLS). The chain crosses the membrane as a helical span at residues 13 to 33 (FMAIMILVAMVLSLMSYALLW). Over 34–83 (KAGNLTDVPNLRIGFYNFCLWKEDIGSLECYNFPELGVLGIPQVGLALAR) the chain is Extracellular. N-linked (GlcNAc...) asparagine glycosylation is present at Asn-37. Residues 84-104 (LGVYGALVLAVFVPLPLLLAQ) form a helical membrane-spanning segment. The Cytoplasmic portion of the chain corresponds to 105 to 117 (CNSDEGEWRLAVG). The chain crosses the membrane as a helical span at residues 118–138 (FLGASSVLLAGGLSLFLFLVW). Topologically, residues 139–149 (KWLRLSFLGPG) are extracellular. Residues 150–170 (FLSLCLAQALLIILLMAMVMF) traverse the membrane as a helical segment. The Cytoplasmic segment spans residues 171-184 (PPRDKKDKNHWENC).

The protein resides in the membrane. The protein is Transmembrane protein 140 (Tmem140) of Rattus norvegicus (Rat).